We begin with the raw amino-acid sequence, 178 residues long: Deoxycytidylate deaminase (178 aa).

Residues 14-146 (EWPEYFMAVA…EATAARLLFD (133 aa)) form the CMP/dCMP-type deaminase domain. Residue H84 participates in Zn(2+) binding. The active-site Proton donor is E86. Zn(2+)-binding residues include C110 and C113. Phosphoserine is present on S174.

Belongs to the cytidine and deoxycytidylate deaminase family. As to quaternary structure, homohexamer. The cofactor is Zn(2+).

The catalysed reaction is dCMP + H2O + H(+) = dUMP + NH4(+). It catalyses the reaction 5-hydroxymethyl-dCMP + H2O + H(+) = 5-hydroxymethyl-dUMP + NH4(+). Its activity is regulated as follows. Allosteric enzyme whose activity is greatly influenced by the end products of its metabolic pathway, dCTP and dTTP. Catalyzes the deamination of dCMP to dUMP, providing the nucleoside monophosphate substrate for the thymidylate synthase/TYMS. Also, part of a nucleotide salvage pathway that eliminates epigenetically modified 5-hydroxymethyl-dCMP (hmdCMP) in a two-step process entailing deamination to cytotoxic 5-hydroxymethyl-dUMP (hmdUMP), followed by its hydrolysis into 5-hydroxymethyluracil (hmU) and 2-deoxy-D-ribose 5-phosphate (deoxyribosephosphate). Catalyzes the first step in that pathway, the deamination of 5-hydroxymethyl-dCMP (hmdCMP). This Pongo abelii (Sumatran orangutan) protein is Deoxycytidylate deaminase.